The primary structure comprises 288 residues: Pyruvate synthase subunit PorB (288 aa).

[4Fe-4S] cluster contacts are provided by cysteine 16, cysteine 19, and cysteine 44. Over residues 137-148 the composition is skewed to polar residues; it reads STPYGASTTTSP. Residues 137–159 form a disordered region; it reads STPYGASTTTSPHGKESFGEDRP. Residues 149–159 show a composition bias toward basic and acidic residues; it reads HGKESFGEDRP. Cysteine 208 is a binding site for [4Fe-4S] cluster.

In terms of assembly, heterotetramer of one alpha, one beta, one delta and one gamma chain. Requires [4Fe-4S] cluster as cofactor.

The catalysed reaction is 2 oxidized [2Fe-2S]-[ferredoxin] + pyruvate + CoA = 2 reduced [2Fe-2S]-[ferredoxin] + acetyl-CoA + CO2 + H(+). The protein is Pyruvate synthase subunit PorB (porB) of Methanothermobacter thermautotrophicus (strain ATCC 29096 / DSM 1053 / JCM 10044 / NBRC 100330 / Delta H) (Methanobacterium thermoautotrophicum).